Reading from the N-terminus, the 407-residue chain is Aspartate aminotransferase, cytoplasmic (407 aa).

3 residues coordinate L-aspartate: glycine 39, tryptophan 136, and asparagine 189. Lysine 253 bears the N6-(pyridoxal phosphate)lysine mark. Arginine 381 serves as a coordination point for L-aspartate.

It belongs to the class-I pyridoxal-phosphate-dependent aminotransferase family. As to quaternary structure, homodimer. Requires pyridoxal 5'-phosphate as cofactor.

Its subcellular location is the cytoplasm. The enzyme catalyses L-aspartate + 2-oxoglutarate = oxaloacetate + L-glutamate. Important for the metabolism of amino acids and Krebs-cycle related organic acids. In plants, it is involved in nitrogen metabolism and in aspects of carbon and energy metabolism. The polypeptide is Aspartate aminotransferase, cytoplasmic (Oryza sativa subsp. japonica (Rice)).